We begin with the raw amino-acid sequence, 342 residues long: S-adenosylmethionine:tRNA ribosyltransferase-isomerase (342 aa).

Belongs to the QueA family. Monomer.

It is found in the cytoplasm. It carries out the reaction 7-aminomethyl-7-carbaguanosine(34) in tRNA + S-adenosyl-L-methionine = epoxyqueuosine(34) in tRNA + adenine + L-methionine + 2 H(+). It participates in tRNA modification; tRNA-queuosine biosynthesis. Its function is as follows. Transfers and isomerizes the ribose moiety from AdoMet to the 7-aminomethyl group of 7-deazaguanine (preQ1-tRNA) to give epoxyqueuosine (oQ-tRNA). This chain is S-adenosylmethionine:tRNA ribosyltransferase-isomerase, found in Streptococcus agalactiae serotype III (strain NEM316).